A 257-amino-acid polypeptide reads, in one-letter code: MAVGKNKKMGKKGAKKKVVDPFTRKEWYDIKAPSMFNVQHIGKTLVNRTQGTKIASEGLKGRVYEVSLGDLNNAESEFRKMRLICEDVQGRTCLTNFHGMRLTRDKLCSIVKKWHTLIEANVAVKTSDGYLLRLFCIGFTKKNARQLKKTSYAKSSKIRQIRAKMVEYMQKEVQGSDLKDVCHKLVPDSIGKDIEKACSYIYPLQDVCIRKVKILKKPKFEIGRLMEMHTDVSTFTSAEGEKIERPDDYEPPVQESV.

The tract at residues 236–257 (TSAEGEKIERPDDYEPPVQESV) is disordered. Basic and acidic residues predominate over residues 239 to 248 (EGEKIERPDD).

It belongs to the eukaryotic ribosomal protein eS1 family. As to quaternary structure, component of the small ribosomal subunit. Mature ribosomes consist of a small (40S) and a large (60S) subunit. The 40S subunit contains about 33 different proteins and 1 molecule of RNA (18S). The 60S subunit contains about 49 different proteins and 3 molecules of RNA (28S, 5.8S and 5S).

Its subcellular location is the cytoplasm. The protein is Small ribosomal subunit protein eS1 of Brugia malayi (Filarial nematode worm).